Consider the following 65-residue polypeptide: Small ribosomal subunit protein eS27 (65 aa).

Zn(2+) is bound by residues Cys-20, Cys-23, Cys-39, and Cys-42. A C4-type zinc finger spans residues 20–42 (CIDCGNEQIVFSHPATPVRCLVC).

The protein belongs to the eukaryotic ribosomal protein eS27 family. As to quaternary structure, part of the 30S ribosomal subunit. Zn(2+) serves as cofactor.

This is Small ribosomal subunit protein eS27 from Thermococcus kodakarensis (strain ATCC BAA-918 / JCM 12380 / KOD1) (Pyrococcus kodakaraensis (strain KOD1)).